The chain runs to 82 residues: Bowman-Birk type proteinase inhibitor (82 aa).

A disordered region spans residues 1 to 24 (SGHHDETTDEPSESSKPCCDQCSC). Disulfide bonds link Cys-18–Cys-72, Cys-19–Cys-34, Cys-22–Cys-68, Cys-24–Cys-32, Cys-42–Cys-49, Cys-46–Cys-61, and Cys-51–Cys-59.

It belongs to the Bowman-Birk serine protease inhibitor family.

Its function is as follows. Trypsin and chymotrypsin are inhibited simultaneously. There are two separate reactive sites for trypsin and chymotrypsin but they do not inhibit simultaneously. This is Bowman-Birk type proteinase inhibitor from Phaseolus angularis (Azuki bean).